The following is a 379-amino-acid chain: Carboxypeptidase Y-deficient protein 8 (379 aa).

Residues 84–107 (HGSGNSSSKKVTSSTSSSSSNGSV) show a composition bias toward low complexity. Residues 84–108 (HGSGNSSSKKVTSSTSSSSSNGSVD) form a disordered region. Serine 216 bears the Phosphoserine mark.

It belongs to the VPS26 family. As to quaternary structure, component of the retromer complex which consists of VPS29, VPS26, VPS35, VPS5 and VPS17. Component of a retromer subcomplex consisting of VPS29, VPS26 and VPS35.

Its function is as follows. Plays a role in vesicular protein sorting. Required for the endosome-to-Golgi retrieval of the vacuolar protein sorting receptor VPS10. Component of the membrane-associated retromer complex which is essential in endosome-to-Golgi retrograde transport. The VPS29-VPS26-VPS35 subcomplex may be involved in cargo selection. This is Carboxypeptidase Y-deficient protein 8 (PEP8) from Saccharomyces cerevisiae (strain ATCC 204508 / S288c) (Baker's yeast).